Here is a 139-residue protein sequence, read N- to C-terminus: Large ribosomal subunit protein uL16 (139 aa).

It belongs to the universal ribosomal protein uL16 family. Part of the 50S ribosomal subunit.

In terms of biological role, binds 23S rRNA and is also seen to make contacts with the A and possibly P site tRNAs. The sequence is that of Large ribosomal subunit protein uL16 from Chlorobium luteolum (strain DSM 273 / BCRC 81028 / 2530) (Pelodictyon luteolum).